Consider the following 470-residue polypeptide: UDP-glycosyltransferase 75C1 (470 aa).

Histidine 16 functions as the Proton acceptor in the catalytic mechanism. Histidine 16 is a binding site for an anthocyanidin. The UDP-alpha-D-glucose site is built by glutamine 347, histidine 362, tryptophan 365, asparagine 366, serine 367, glutamate 370, aspartate 386, and glutamine 387.

This sequence belongs to the UDP-glycosyltransferase family. Expressed in flowers and fruits, especially in pulp, and, at lower levels, in seeds.

The protein localises to the cytoplasm. The protein resides in the nucleus. It carries out the reaction 2-cis-(+)-abscisate + UDP-alpha-D-glucose = beta-D-glucopyranosyl cis-(+)-abscisate + UDP. It catalyses the reaction (indol-3-yl)acetate + UDP-alpha-D-glucose = 1-O-(indol-3-ylacetyl)-beta-D-glucose + UDP. Its function is as follows. Glucosyltransferase acting on both abscisic acid (ABA) and auxin (IAA). Required for ABA-mediated fruit ripening, seed germination, and negative responses to drought. The sequence is that of UDP-glycosyltransferase 75C1 from Solanum lycopersicum (Tomato).